The sequence spans 290 residues: Barley B recombinant-like protein C (290 aa).

2 disordered regions span residues 60 to 90 (PHHHHQPHHPRDCGTNANANGNGNGVGYGMM) and 102 to 183 (QPEP…RKNI). A compositionally biased stretch (pro residues) spans 104-116 (EPQPQLQHPPSPP). A compositionally biased stretch (basic residues) spans 138-158 (PPKKRQQGRQPKVLRPKKPKK).

This sequence belongs to the BBR/BPC family.

Its subcellular location is the nucleus. In terms of biological role, transcriptional regulator that specifically binds to GA-rich elements (GAGA-repeats) present in regulatory sequences of genes involved in developmental processes. This Oryza sativa subsp. japonica (Rice) protein is Barley B recombinant-like protein C.